Here is a 178-residue protein sequence, read N- to C-terminus: Large ribosomal subunit protein eL20w (178 aa).

It belongs to the eukaryotic ribosomal protein eL20 family.

This is Large ribosomal subunit protein eL20w (RPL18AD) from Arabidopsis thaliana (Mouse-ear cress).